The following is a 538-amino-acid chain: Beta-1,4-mannosyl-glycoprotein 4-beta-N-acetylglucosaminyltransferase (538 aa).

Topologically, residues 1 to 7 (MKMRRYK) are cytoplasmic. The chain crosses the membrane as a helical; Signal-anchor for type II membrane protein span at residues 8–23 (LFLMFCMAGLCLISFL). The Lumenal portion of the chain corresponds to 24-538 (HFFKTLSYVT…VRGKLDTAEG (515 aa)). Positions 120 to 161 (PGTRMLEKPSPGRTEEKTEVSEGSSARGPARRPMRHVLSSRE) are disordered. Asparagine 245, asparagine 263, and asparagine 401 each carry an N-linked (GlcNAc...) asparagine glycan. A disordered region spans residues 507 to 538 (REPKSTVEGGRQNQGSDGRSSAVRGKLDTAEG).

The protein belongs to the glycosyltransferase 17 family. In terms of assembly, interacts with MGAT4D. Highly expressed in brain and kidney and to a much lesser extent in stomach, heart, intestine, uterus, testis, ovary and lung. Not present in spleen, liver and muscle. In brain, expressed in neurons of hippocampus.

Its subcellular location is the golgi apparatus membrane. It catalyses the reaction N(4)-{beta-D-GlcNAc-(1-&gt;2)-alpha-D-Man-(1-&gt;3)-[beta-D-GlcNAc-(1-&gt;2)-alpha-D-Man-(1-&gt;6)]-beta-D-Man-(1-&gt;4)-beta-D-GlcNAc-(1-&gt;4)-beta-D-GlcNAc}-L-asparaginyl-[protein] + UDP-N-acetyl-alpha-D-glucosamine = N(4)-{beta-D-GlcNAc-(1-&gt;2)-alpha-D-Man-(1-&gt;3)-[beta-D-GlcNAc-(1-&gt;4)]-[beta-D-GlcNAc-(1-&gt;2)-alpha-D-Man-(1-&gt;6)]-beta-D-Man-(1-&gt;4)-beta-D-GlcNAc-(1-&gt;4)-beta-D-GlcNAc}-L-asparaginyl-[protein] + UDP + H(+). It functions in the pathway protein modification; protein glycosylation. Functionally, it is involved in the regulation of the biosynthesis and biological function of glycoprotein oligosaccharides. Catalyzes the addition of N-acetylglucosamine in beta 1-4 linkage to the beta-linked mannose of the trimannosyl core of N-linked sugar chains, called bisecting N-acetylglucosamine (GlcNAc). It is one of the most important enzymes involved in the regulation of the biosynthesis of glycoprotein oligosaccharides. The addition of this bisecting GlcNAc residue alters not only the composition, but also the conformation of the N-glycan. The introduction of the bisecting GlcNAc residue results in the suppression of further processing and elongation of N-glycans, precluding the formation of beta-1,6 GlcNAc branching, catalyzed by MGAT5 since it is unable to use the bisected oligosaccharide as a substrate. Addition of bisecting N-acetylglucosamine to CDH1/E-cadherin modulates CDH1 cell membrane location. Inhibits NeuAc-alpha-2,3-Gal-beta-1,4-GlcNAc- formation which modulates sialylation levels and plays a role in cell migration regulation. In brain, addition of bisecting N-acetylglucosamine to BACE1 blocks its lysosomal targeting in response to oxidative stress and further degradation which increases its location to early endosome and the APP cleavage. The chain is Beta-1,4-mannosyl-glycoprotein 4-beta-N-acetylglucosaminyltransferase from Mus musculus (Mouse).